We begin with the raw amino-acid sequence, 100 residues long: NADH-quinone oxidoreductase subunit K 2 (100 aa).

3 helical membrane-spanning segments follow: residues 4–24 (LWWS…GVLL), 28–48 (ILIV…NFIA), and 60–80 (IFAI…LGIL).

This sequence belongs to the complex I subunit 4L family. NDH-1 is composed of 14 different subunits. Subunits NuoA, H, J, K, L, M, N constitute the membrane sector of the complex.

The protein resides in the cell inner membrane. The enzyme catalyses a quinone + NADH + 5 H(+)(in) = a quinol + NAD(+) + 4 H(+)(out). Its function is as follows. NDH-1 shuttles electrons from NADH, via FMN and iron-sulfur (Fe-S) centers, to quinones in the respiratory chain. The immediate electron acceptor for the enzyme in this species is believed to be ubiquinone. Couples the redox reaction to proton translocation (for every two electrons transferred, four hydrogen ions are translocated across the cytoplasmic membrane), and thus conserves the redox energy in a proton gradient. This is NADH-quinone oxidoreductase subunit K 2 from Rhizobium meliloti (strain 1021) (Ensifer meliloti).